The primary structure comprises 567 residues: Oxygen-dependent choline dehydrogenase (567 aa).

An FAD-binding site is contributed by 4–33 (DYIIIGAGSAGNVLAARLTEDADVTVLLLE). H473 (proton acceptor) is an active-site residue.

The protein belongs to the GMC oxidoreductase family. FAD serves as cofactor.

It carries out the reaction choline + A = betaine aldehyde + AH2. The catalysed reaction is betaine aldehyde + NAD(+) + H2O = glycine betaine + NADH + 2 H(+). The protein operates within amine and polyamine biosynthesis; betaine biosynthesis via choline pathway; betaine aldehyde from choline (cytochrome c reductase route): step 1/1. Its function is as follows. Involved in the biosynthesis of the osmoprotectant glycine betaine. Catalyzes the oxidation of choline to betaine aldehyde and betaine aldehyde to glycine betaine at the same rate. This chain is Oxygen-dependent choline dehydrogenase, found in Yersinia pestis (strain Pestoides F).